The chain runs to 219 residues: Large ribosomal subunit protein uL3 (219 aa).

Positions serine 140 to arginine 163 are disordered.

It belongs to the universal ribosomal protein uL3 family. As to quaternary structure, part of the 50S ribosomal subunit. Forms a cluster with proteins L14 and L19.

One of the primary rRNA binding proteins, it binds directly near the 3'-end of the 23S rRNA, where it nucleates assembly of the 50S subunit. This is Large ribosomal subunit protein uL3 from Leifsonia xyli subsp. xyli (strain CTCB07).